A 651-amino-acid polypeptide reads, in one-letter code: Peptide-N(4)-(N-acetyl-beta-glucosaminyl)asparagine amidase (651 aa).

At alanine 2 the chain carries N-acetylalanine. Positions glutamate 30–lysine 91 constitute a PUB domain. A disordered region spans residues serine 116–proline 153. The span at methionine 143–glutamine 152 shows a compositional bias: polar residues. Zn(2+) is bound by residues cysteine 247, cysteine 250, cysteine 280, and cysteine 283. The Nucleophile role is filled by cysteine 306. Residues histidine 333 and aspartate 350 contribute to the active site. One can recognise a PAW domain in the interval glutamate 451–leucine 651.

Belongs to the transglutaminase-like superfamily. PNGase family. As to quaternary structure, component of a complex required to couple retrotranslocation, ubiquitination and deglycosylation composed of NGLY1, SAKS1, AMFR, VCP and RAD23B. Interacts with the proteasome components RAD23B and PSMC1. Interacts with directly with VCP. Interacts with DERL1, bringing it close to the endoplasmic reticulum membrane. Interacts with SAKS1. Zn(2+) is required as a cofactor.

It localises to the cytoplasm. The catalysed reaction is Hydrolysis of an N(4)-(acetyl-beta-D-glucosaminyl)asparagine residue in which the glucosamine residue may be further glycosylated, to yield a (substituted) N-acetyl-beta-D-glucosaminylamine and a peptide containing an aspartate residue.. With respect to regulation, inhibited by Z-VAD-fmk, a well-known caspase inhibitor, which inhibits enzyme activity through covalent binding of the carbohydrate to the single Cys-306 residue. In terms of biological role, specifically deglycosylates the denatured form of N-linked glycoproteins in the cytoplasm and assists their proteasome-mediated degradation. Cleaves the beta-aspartyl-glucosamine (GlcNAc) of the glycan and the amide side chain of Asn, converting Asn to Asp. Prefers proteins containing high-mannose over those bearing complex type oligosaccharides. Can recognize misfolded proteins in the endoplasmic reticulum that are exported to the cytosol to be destroyed and deglycosylate them, while it has no activity toward native proteins. Deglycosylation is a prerequisite for subsequent proteasome-mediated degradation of some, but not all, misfolded glycoproteins. This chain is Peptide-N(4)-(N-acetyl-beta-glucosaminyl)asparagine amidase (Ngly1), found in Rattus norvegicus (Rat).